Consider the following 246-residue polypeptide: Putative F-box/LRR-repeat protein 9 (246 aa).

Residues 18-65 (YRNWAELPPELTSSILLRLGAIEILQNAQRVCKSWRRVCQDPSMWRKI) enclose the F-box domain.

This chain is Putative F-box/LRR-repeat protein 9 (FBL9), found in Arabidopsis thaliana (Mouse-ear cress).